Consider the following 572-residue polypeptide: Dihydroxy-acid dehydratase (572 aa).

Mg(2+) is bound at residue D78. C119 contacts [2Fe-2S] cluster. Mg(2+) contacts are provided by D120 and K121. The residue at position 121 (K121) is an N6-carboxylysine. C192 lines the [2Fe-2S] cluster pocket. E459 is a Mg(2+) binding site. S485 (proton acceptor) is an active-site residue.

This sequence belongs to the IlvD/Edd family. As to quaternary structure, homodimer. Requires [2Fe-2S] cluster as cofactor. Mg(2+) serves as cofactor.

The catalysed reaction is (2R)-2,3-dihydroxy-3-methylbutanoate = 3-methyl-2-oxobutanoate + H2O. It carries out the reaction (2R,3R)-2,3-dihydroxy-3-methylpentanoate = (S)-3-methyl-2-oxopentanoate + H2O. The protein operates within amino-acid biosynthesis; L-isoleucine biosynthesis; L-isoleucine from 2-oxobutanoate: step 3/4. It participates in amino-acid biosynthesis; L-valine biosynthesis; L-valine from pyruvate: step 3/4. Its function is as follows. Functions in the biosynthesis of branched-chain amino acids. Catalyzes the dehydration of (2R,3R)-2,3-dihydroxy-3-methylpentanoate (2,3-dihydroxy-3-methylvalerate) into 2-oxo-3-methylpentanoate (2-oxo-3-methylvalerate) and of (2R)-2,3-dihydroxy-3-methylbutanoate (2,3-dihydroxyisovalerate) into 2-oxo-3-methylbutanoate (2-oxoisovalerate), the penultimate precursor to L-isoleucine and L-valine, respectively. This is Dihydroxy-acid dehydratase from Helicobacter hepaticus (strain ATCC 51449 / 3B1).